A 260-amino-acid polypeptide reads, in one-letter code: UPF0246 protein Cbei_1739 (260 aa).

The protein belongs to the UPF0246 family.

This is UPF0246 protein Cbei_1739 from Clostridium beijerinckii (strain ATCC 51743 / NCIMB 8052) (Clostridium acetobutylicum).